A 362-amino-acid chain; its full sequence is Peptide chain release factor 1 (362 aa).

Gln-237 is modified (N5-methylglutamine).

The protein belongs to the prokaryotic/mitochondrial release factor family. Methylated by PrmC. Methylation increases the termination efficiency of RF1.

The protein resides in the cytoplasm. Peptide chain release factor 1 directs the termination of translation in response to the peptide chain termination codons UAG and UAA. The sequence is that of Peptide chain release factor 1 from Vibrio campbellii (strain ATCC BAA-1116).